The chain runs to 839 residues: Autophagy-related protein 9A (839 aa).

Ala-2 bears the N-acetylalanine mark. The Cytoplasmic portion of the chain corresponds to 2-61; the sequence is AQFDTEYQRLEASYSDSPPGEEDLLVHVAEGSKSPWHHIENLDLFFSRVYNLHQKNGFTC. The Tyrosine-based sorting signal motif lies at 8-11; it reads YQRL. Ser-14, Ser-16, and Ser-18 each carry phosphoserine. Residues 62 to 84 traverse the membrane as a helical segment; the sequence is MLIGEIFELMQFLFVVAFTTFLV. Topologically, residues 85–128 are lumenal; sequence SCVDYDILFANKMVNHSLHPTEPVKVTLPDAFLPAQVCSARIQE. Asn-99 carries N-linked (GlcNAc...) asparagine glycosylation. Residues 129-154 traverse the membrane as a helical segment; it reads NGSLITILVIAGVFWIHRLIKFIYNI. Residues 155 to 290 lie on the Cytoplasmic side of the membrane; the sequence is CCYWEIHSFY…ELAQRLSNRI (136 aa). An intramembrane segment occupies 291–301; the sequence is LWIGIANFLLC. Topologically, residues 302 to 319 are cytoplasmic; sequence PLILIWQILYAFFSYAEV. An intramembrane segment occupies 320–328; it reads LKREPGALG. Residues 329–371 are Cytoplasmic-facing; it reads ARCWSLYGRCYLRHFNELEHELQSRLNRGYKPASKYMNCFLSP. A helical transmembrane segment spans residues 372 to 397; sequence LLTLLAKNGAFFAGSILAVLIALTIY. At 398–406 the chain is on the lumenal side; the sequence is DEDVLAVEH. Residues 407–424 form a helical membrane-spanning segment; it reads VLTTVTLLGVTVTVCRSF. Topologically, residues 425-470 are cytoplasmic; the sequence is IPDQHMVFCPEQLLRVILAHIHYMPDHWQGNAHRSQTRDEFAQLFQ. An intramembrane segment occupies 471–480; that stretch reads YKAVFILEEL. The Cytoplasmic portion of the chain corresponds to 481 to 483; it reads LSP. An intramembrane segment occupies 484-492; the sequence is IVTPLILIF. Over 493-839 the chain is Cytoplasmic; the sequence is CLRPRALEII…DELPPQVHKV (347 aa). Phosphoserine is present on residues Ser-656, Ser-735, Ser-738, Ser-741, and Ser-828. 2 disordered regions span residues 656–689 and 717–839; these read SPLQ…SSVW and HKQQ…VHKV. Residues 724 to 736 show a composition bias toward basic and acidic residues; the sequence is EPERHVWHRRESD. Composition is skewed to acidic residues over residues 737–747 and 823–832; these read ESGESAPEEGG and VPEEGSEDEL.

It belongs to the ATG9 family. Homotrimer; forms a homotrimer with a central pore that forms a path between the two membrane leaflets. Interacts (via cytoplasmic its C-terminus) with ATG2A. Interacts with SUPT20H. Interacts (via the tyrosine-based sorting signal motif) with AP4M1; promoting association with the AP-4 complex. Interacts with ARFIP1 and ARFIP2. Interacts with PI4K2A and PI4KB. Interacts with ATG4A; the interaction is direct and promotes ATG9A trafficking. In terms of processing, ufmylated in a DDRGK1 dependent manner.

The protein localises to the preautophagosomal structure membrane. It localises to the cytoplasmic vesicle. It is found in the autophagosome membrane. Its subcellular location is the golgi apparatus. The protein resides in the trans-Golgi network membrane. The protein localises to the late endosome membrane. It localises to the recycling endosome membrane. It is found in the endoplasmic reticulum membrane. Its subcellular location is the mitochondrion membrane. It carries out the reaction a 1,2-diacyl-sn-glycero-3-phosphocholine(in) = a 1,2-diacyl-sn-glycero-3-phosphocholine(out). The enzyme catalyses a 1,2-diacyl-sn-glycero-3-phospho-L-serine(in) = a 1,2-diacyl-sn-glycero-3-phospho-L-serine(out). It catalyses the reaction a 1,2-diacyl-sn-glycero-3-phosphoethanolamine(in) = a 1,2-diacyl-sn-glycero-3-phosphoethanolamine(out). Its function is as follows. Phospholipid scramblase involved in autophagy by mediating autophagosomal membrane expansion. Cycles between the preautophagosomal structure/phagophore assembly site (PAS) and the cytoplasmic vesicle pool and supplies membrane for the growing autophagosome. Lipid scramblase activity plays a key role in preautophagosomal structure/phagophore assembly by distributing the phospholipids that arrive through ATG2 (ATG2A or ATG2B) from the cytoplasmic to the luminal leaflet of the bilayer, thereby driving autophagosomal membrane expansion. Also required to supply phosphatidylinositol 4-phosphate to the autophagosome initiation site by recruiting the phosphatidylinositol 4-kinase beta (PI4KB) in a process dependent on ARFIP2, but not ARFIP1. In addition to autophagy, also plays a role in necrotic cell death. This Rattus norvegicus (Rat) protein is Autophagy-related protein 9A.